The chain runs to 118 residues: Large ribosomal subunit protein bL20 (118 aa).

The protein belongs to the bacterial ribosomal protein bL20 family.

In terms of biological role, binds directly to 23S ribosomal RNA and is necessary for the in vitro assembly process of the 50S ribosomal subunit. It is not involved in the protein synthesizing functions of that subunit. This is Large ribosomal subunit protein bL20 from Pectobacterium atrosepticum (strain SCRI 1043 / ATCC BAA-672) (Erwinia carotovora subsp. atroseptica).